The sequence spans 422 residues: Beta-1,3-galactosyltransferase 2 (422 aa).

Over 1 to 24 (MLQWRRRHCCFAKMTWNAKRSLFR) the chain is Cytoplasmic. The helical; Signal-anchor for type II membrane protein transmembrane segment at 25 to 45 (THLIGVLSLVFLFAMFLFFNH) threads the bilayer. The Lumenal portion of the chain corresponds to 46 to 422 (HDWLPGRAGF…AGRYRHRKLH (377 aa)). Asn-75, Asn-100, Asn-119, Asn-176, and Asn-226 each carry an N-linked (GlcNAc...) asparagine glycan. A disordered region spans residues 90–110 (TLRPQTATNSNNTDLSPQGVT).

This sequence belongs to the glycosyltransferase 31 family. It depends on Mn(2+) as a cofactor.

The protein resides in the golgi apparatus membrane. The catalysed reaction is an N-acetyl-beta-D-glucosaminyl derivative + UDP-alpha-D-galactose = a beta-D-galactosyl-(1-&gt;3)-N-acetyl-beta-D-glucosaminyl derivative + UDP + H(+). The enzyme catalyses a beta-D-GlcNAc-(1-&gt;3)-beta-D-Gal-(1-&gt;4)-beta-D-Glc-(1&lt;-&gt;1)-Cer(d18:1(4E)) + UDP-alpha-D-galactose = a beta-D-Gal-(1-&gt;3)-beta-D-GlcNAc-(1-&gt;3)-beta-D-Gal-(1-&gt;4)-beta-D-Glc-(1&lt;-&gt;1')-Cer(d18:1(4E)) + UDP + H(+). It carries out the reaction a neolactoside IV(3)-beta-GlcNAc-nLc4Cer(d18:1(4E)) + UDP-alpha-D-galactose = a neolactoside IV(3)-beta-[Gal-beta-(1-&gt;3)-GlcNAc]-nLc4Cer(d18:1(4E)) + UDP + H(+). Its pathway is protein modification; protein glycosylation. Its function is as follows. Beta-1,3-galactosyltransferase that transfers galactose from UDP-galactose to substrates with a terminal beta-N-acetylglucosamine (beta-GlcNAc) residue. Can also utilize substrates with a terminal galactose residue, albeit with lower efficiency. Involved in the biosynthesis of the carbohydrate moieties of glycolipids and glycoproteins. Inactive towards substrates with terminal alpha-N-acetylglucosamine (alpha-GlcNAc) or alpha-N-acetylgalactosamine (alpha-GalNAc) residues. The polypeptide is Beta-1,3-galactosyltransferase 2 (B3GALT2) (Pongo abelii (Sumatran orangutan)).